The sequence spans 348 residues: Anthranilate phosphoribosyltransferase (348 aa).

5-phospho-alpha-D-ribose 1-diphosphate contacts are provided by residues Gly83, 86 to 87, Thr91, 93 to 96, 111 to 119, and Thr123; these read GD, NVST, and KHGNRAASS. Gly83 contributes to the anthranilate binding site. Residue Ser95 coordinates Mg(2+). Asn114 serves as a coordination point for anthranilate. Arg169 serves as a coordination point for anthranilate. Positions 227 and 228 each coordinate Mg(2+).

It belongs to the anthranilate phosphoribosyltransferase family. Homodimer. Mg(2+) serves as cofactor.

The catalysed reaction is N-(5-phospho-beta-D-ribosyl)anthranilate + diphosphate = 5-phospho-alpha-D-ribose 1-diphosphate + anthranilate. It participates in amino-acid biosynthesis; L-tryptophan biosynthesis; L-tryptophan from chorismate: step 2/5. Functionally, catalyzes the transfer of the phosphoribosyl group of 5-phosphorylribose-1-pyrophosphate (PRPP) to anthranilate to yield N-(5'-phosphoribosyl)-anthranilate (PRA). This Thermobifida fusca (strain YX) protein is Anthranilate phosphoribosyltransferase.